Here is a 566-residue protein sequence, read N- to C-terminus: Putative ankyrin repeat protein RF_0987 (566 aa).

3 disordered regions span residues 61-118 (KKKN…HENS), 276-314 (PPVM…SAEI), and 355-392 (VNNN…SEST). Basic and acidic residues predominate over residues 78 to 92 (NQEEPKLASQEHTEA). The segment covering 101-112 (TGNTALPSVTAS) has biased composition (polar residues). The span at 296 to 308 (TPVTTPSKVVPTT) shows a compositional bias: low complexity. Positions 365-378 (EKSPPVSSSNVTIQ) are enriched in polar residues. ANK repeat units lie at residues 506–535 (SGET…KIST) and 539–566 (ECQY…KGYQ).

This is Putative ankyrin repeat protein RF_0987 from Rickettsia felis (strain ATCC VR-1525 / URRWXCal2) (Rickettsia azadi).